Consider the following 433-residue polypeptide: Transcription factor elt-2 (433 aa).

Disordered regions lie at residues 1 to 47 (MDNN…ELPR) and 194 to 235 (GQPP…RQGL). Polar residues predominate over residues 27-43 (PTQNMDPPEQNNESQLS). A compositionally biased stretch (low complexity) spans 211–234 (AKQSSKKSSSSNRGSNGSASRRQG). A GATA-type zinc finger spans residues 237 to 261 (CSNCNGTNTTLWRRNAEGDPVCNAC). The disordered stretch occupies residues 275–332 (SMKKEGALQTRKRKSKSGDSSTPSTSRARERKFERASSSTEKAQRSSNRRAGSAKADR). Polar residues predominate over residues 310–324 (ASSSTEKAQRSSNRR).

Interacts with lag-1. Interacts with pha-4. Interacts with rpt-6. May be ubiquitinated in response to infection by B.pseudomallei. As to expression, expressed in the intestine.

Its subcellular location is the nucleus. In terms of biological role, transcriptional activator that binds to the consensus sequence 5'-[AT]GATA[AG]-3'. Predominantly directs the transcription of intestinal genes such as ges-1, cpr-6, pho-1, ftn-1, vit-2 and lev-11, and itself. Required for gut-specific differentiation, specifically acting with the GATA region-binding transcription factor elt-7 to control normal gene expression and promote normal formation of the intestine. Regulates intestinal gene expression in response to hypoxia to promote longevity. Modulation of longevity may, in part, be the result of regulation of expression of daf-16 isoforms d and f in the intestine. Regulates tissue specific gene expression at basal levels and in response to bacterial infection in the intestine to control innate immunity. Plays a role in the induction of metal-responsive genes, activating gene expression from zinc-activated promoters and iron-dependent promoters and enhancers. May regulate the expression of genes that control sensitivity to oxidative stress, in a mab-3-dependent manner, and osmotic stress, in conjunction with the GATA region-binding transcription factor elt-3. May play a role in sphingolipid signaling by regulating the expression of the sphingosine-1-phosphate degrading enzyme, sphingosine-1-phosphate lyase. May act with the Notch signaling pathway to promote endodermal gene expression. Has a protective role in response to infection by Gram-negative bacteria such as S.enterica, E.coli, P.aeruginosa and B.pseudomallei, Gram-positive bacterium E.faecalis and fungal pathogen C.neoformans. An association with the 26S proteasome regulatory subunit rpt-6, in part, controls gene expression in response to infection by P.aeruginosa. Regulates gene expression during the recovery phase following a bacterial infection. May act with p38-activated transcription factors to control p38 gene induction in response to bacterial infection. Controls lysosome formation in the intestine by controlling lysosomal gene expression. This chain is Transcription factor elt-2, found in Caenorhabditis elegans.